We begin with the raw amino-acid sequence, 178 residues long: Methylmalonyl-CoA epimerase, mitochondrial (178 aa).

The N-terminal 38 residues, 1–38 (MRRVVKAAALAAGATGLFSRVQTSVAIGRSFSTPQSQF), are a transit peptide targeting the mitochondrion. The region spanning 49–178 (RLNHVAVAVP…GGVLVELEQA (130 aa)) is the VOC domain. Co(2+) is bound at residue histidine 52. Position 116 is an N6-succinyllysine (lysine 116). Histidine 124 provides a ligand contact to Co(2+). Lysine 152 is subject to N6-acetyllysine; alternate. Lysine 152 is modified (N6-succinyllysine; alternate). Glutamate 174 serves as a coordination point for Co(2+).

Belongs to the methylmalonyl-CoA epimerase family.

It is found in the mitochondrion. The catalysed reaction is (R)-methylmalonyl-CoA = (S)-methylmalonyl-CoA. In terms of biological role, methylmalonyl-CoA epimerase involved in propionyl-CoA metabolism. This is Methylmalonyl-CoA epimerase, mitochondrial from Mus musculus (Mouse).